The chain runs to 163 residues: Large ribosomal subunit protein uL18 (163 aa).

The protein belongs to the universal ribosomal protein uL18 family. In terms of assembly, part of the 50S ribosomal subunit. Contacts the 5S and 23S rRNAs.

This is one of the proteins that bind and probably mediate the attachment of the 5S RNA into the large ribosomal subunit, where it forms part of the central protuberance. This Thermoplasma acidophilum (strain ATCC 25905 / DSM 1728 / JCM 9062 / NBRC 15155 / AMRC-C165) protein is Large ribosomal subunit protein uL18.